Here is a 238-residue protein sequence, read N- to C-terminus: Uridylate kinase (238 aa).

12–15 lines the ATP pocket; that stretch reads KLSG. G54 contacts UMP. Residues G55 and R59 each coordinate ATP. UMP is bound by residues D74 and 135–142; that span reads TGNPFFTT. The ATP site is built by T162, Y168, and D171.

It belongs to the UMP kinase family. As to quaternary structure, homohexamer.

The protein localises to the cytoplasm. The enzyme catalyses UMP + ATP = UDP + ADP. The protein operates within pyrimidine metabolism; CTP biosynthesis via de novo pathway; UDP from UMP (UMPK route): step 1/1. Its activity is regulated as follows. Inhibited by UTP. Its function is as follows. Catalyzes the reversible phosphorylation of UMP to UDP. The polypeptide is Uridylate kinase (Methylobacillus flagellatus (strain ATCC 51484 / DSM 6875 / VKM B-1610 / KT)).